The chain runs to 110 residues: Putative UPF0377 protein YIR040C (110 aa).

The protein belongs to the UPF0377 family.

In Saccharomyces cerevisiae (strain ATCC 204508 / S288c) (Baker's yeast), this protein is Putative UPF0377 protein YIR040C.